A 56-amino-acid chain; its full sequence is Large ribosomal subunit protein eL40 (56 aa).

It belongs to the eukaryotic ribosomal protein eL40 family.

The polypeptide is Large ribosomal subunit protein eL40 (Metallosphaera sedula (strain ATCC 51363 / DSM 5348 / JCM 9185 / NBRC 15509 / TH2)).